A 217-amino-acid chain; its full sequence is uncharacterized protein (217 aa).

Residues L2–L216 form the ABC transporter domain. An ATP-binding site is contributed by G34–S41.

It belongs to the ABC transporter superfamily.

In terms of biological role, probably part of a binding-protein-dependent transport system YnjCD. Probably responsible for energy coupling to the transport system. This is an uncharacterized protein from Escherichia coli (strain K12).